We begin with the raw amino-acid sequence, 600 residues long: Threonine dehydratase, mitochondrial (600 aa).

Position 144 is an N6-(pyridoxal phosphate)lysine (K144). ACT-like domains are found at residues V425–D497 and R519–N590.

This sequence belongs to the serine/threonine dehydratase family. Homotetramer. Pyridoxal 5'-phosphate serves as cofactor.

Its subcellular location is the mitochondrion. The protein localises to the cytoplasm. It catalyses the reaction L-threonine = 2-oxobutanoate + NH4(+). It participates in amino-acid biosynthesis; L-isoleucine biosynthesis; 2-oxobutanoate from L-threonine: step 1/1. Isoleucine allosterically inhibits while valine allosterically activates this enzyme. In Schizosaccharomyces pombe (strain 972 / ATCC 24843) (Fission yeast), this protein is Threonine dehydratase, mitochondrial.